Reading from the N-terminus, the 168-residue chain is MKSLNRQTVSRFRKLSVPAAIMMLLSTIISGIGTFLHYREELMPSACANGWIQYDKHCYLDTNIKMSTDNAVYQCRKLRARLPRPDTRHLRVLFSIFYKDYWVSLKKTNDKWLDINNDKDIDISKLTNFKQLNSTTDSEACYIYKSGKLVKTVCKSTQSVLCVKRFYK.

Residues 15–37 form a helical membrane-spanning segment; sequence LSVPAAIMMLLSTIISGIGTFLH. Intrachain disulfides connect Cys-75–Cys-162 and Cys-141–Cys-154. N-linked (GlcNAc...) asparagine; by host glycosylation occurs at Asn-133.

It belongs to the orthopoxvirus OPG162 protein family. Interacts with protein OPG161. Interacts with protein OPG164. Interacts with protein OPG190.

The protein resides in the virion membrane. It localises to the host Golgi apparatus. Forms a complex with OPG162 and OPG190 to coordinate the incorporation of OPG164 into wrapped enveloped virion (EV) membranes and, subsequently, the production of actin tails. Therefore plays an essential role in efficient cell-to-cell spread of viral particles. This is Protein OPG162 (OPG162) from Monkeypox virus.